Here is a 208-residue protein sequence, read N- to C-terminus: Thymidylate kinase (208 aa).

11–18 (GGEGAGKS) contacts ATP.

It belongs to the thymidylate kinase family.

The catalysed reaction is dTMP + ATP = dTDP + ADP. Phosphorylation of dTMP to form dTDP in both de novo and salvage pathways of dTTP synthesis. This is Thymidylate kinase (tmk) from Caulobacter vibrioides (strain ATCC 19089 / CIP 103742 / CB 15) (Caulobacter crescentus).